A 335-amino-acid polypeptide reads, in one-letter code: Olfactory receptor 52B6 (335 aa).

The Extracellular segment spans residues 1-45 (MAQVRALHKIMALFSANSIGAMNNSDTRIAGCFLTGIPGLEQLHI). A glycan (N-linked (GlcNAc...) asparagine) is linked at asparagine 23. A helical membrane pass occupies residues 46–66 (WLSIPFCIMYITALEGNGILI). Residues 67 to 74 (CVILSQAI) lie on the Cytoplasmic side of the membrane. A helical membrane pass occupies residues 75–95 (LHEPMYIFLSMLASADVLLST). Over 96-119 (TTMPKALANLWLGYSLISFDGCLT) the chain is Extracellular. Residues cysteine 117 and cysteine 208 are joined by a disulfide bond. Residues 120–139 (QMFFIHFLFIHSAVLLAMAF) traverse the membrane as a helical segment. At 140–158 (DRYVAICSPLRYVTILTSK) the chain is on the cytoplasmic side. Residues 159–179 (VIGKIVTAALSHSFIIMFPSI) traverse the membrane as a helical segment. Over 180–215 (FLLEHLHYCQINIIAHTFCEHMGIAHLSCSDISINV) the chain is Extracellular. The chain crosses the membrane as a helical span at residues 216-236 (WYGLAAALLSTGLDIMLITVS). Residues 237–256 (YIHILQAVFRLLSQDARSKA) lie on the Cytoplasmic side of the membrane. The helical transmembrane segment at 257 to 277 (LSTCGSHICVILLFYVPALFS) threads the bilayer. The Extracellular portion of the chain corresponds to 278 to 293 (VFAYRFGGRSVPCYVH). Residues 294–314 (ILLASLYVVIPPMLNPVIYGV) traverse the membrane as a helical segment. The Cytoplasmic segment spans residues 315–335 (RTKPILEGAKQMFSNLAKGSK).

This sequence belongs to the G-protein coupled receptor 1 family.

It is found in the cell membrane. In terms of biological role, odorant receptor. This Homo sapiens (Human) protein is Olfactory receptor 52B6 (OR52B6).